The primary structure comprises 256 residues: 5-keto-4-deoxy-D-glucarate aldolase (256 aa).

The Proton acceptor role is filled by His-50. Gln-151 contributes to the substrate binding site. Residue Glu-153 coordinates Mg(2+). The substrate site is built by Ser-178 and Asp-179. Asp-179 provides a ligand contact to Mg(2+).

The protein belongs to the HpcH/HpaI aldolase family. KDGluc aldolase subfamily. Homohexamer; trimer of dimers. The cofactor is Mg(2+).

It carries out the reaction 5-dehydro-4-deoxy-D-glucarate = 2-hydroxy-3-oxopropanoate + pyruvate. The catalysed reaction is 2-dehydro-3-deoxy-D-glucarate = 2-hydroxy-3-oxopropanoate + pyruvate. The protein operates within carbohydrate acid metabolism; galactarate degradation; D-glycerate from galactarate: step 2/3. Catalyzes the reversible retro-aldol cleavage of both 5-keto-4-deoxy-D-glucarate and 2-keto-3-deoxy-D-glucarate to pyruvate and tartronic semialdehyde. This chain is 5-keto-4-deoxy-D-glucarate aldolase, found in Escherichia fergusonii (strain ATCC 35469 / DSM 13698 / CCUG 18766 / IAM 14443 / JCM 21226 / LMG 7866 / NBRC 102419 / NCTC 12128 / CDC 0568-73).